Reading from the N-terminus, the 632-residue chain is tRNA-guanine(15) transglycosylase (632 aa).

D86 (nucleophile) is an active-site residue. Substrate-binding residues include D121 and G186. Positions A553–D628 constitute a PUA domain.

It belongs to the archaeosine tRNA-ribosyltransferase family. Zn(2+) is required as a cofactor.

It catalyses the reaction guanosine(15) in tRNA + 7-cyano-7-deazaguanine = 7-cyano-7-carbaguanosine(15) in tRNA + guanine. It functions in the pathway tRNA modification; archaeosine-tRNA biosynthesis. Functionally, exchanges the guanine residue with 7-cyano-7-deazaguanine (preQ0) at position 15 in the dihydrouridine loop (D-loop) of archaeal tRNAs. The polypeptide is tRNA-guanine(15) transglycosylase (Thermoplasma acidophilum (strain ATCC 25905 / DSM 1728 / JCM 9062 / NBRC 15155 / AMRC-C165)).